The chain runs to 586 residues: Protein HOL1 (586 aa).

The Extracellular segment spans residues 1-66; that stretch reads MDKYTNRDHP…NWSSWRKLAH (66 aa). A helical membrane pass occupies residues 67 to 87; it reads FGLMAFITAFTAATSNDAGAA. Topologically, residues 88 to 103 are cytoplasmic; that stretch reads QDSLNEIYGISYDSMN. Residues 104–124 traverse the membrane as a helical segment; sequence TGAGVLFLGIGWSTLFLAPFA. Residues 125 to 130 lie on the Extracellular side of the membrane; it reads NLYGRK. A helical membrane pass occupies residues 131–151; it reads ITYIVCTTLGLFGALWFALAK. Residues 152–189 are Cytoplasmic-facing; sequence RTSDTIWSQLFVGISESCAEAQVQLSLSDIFFQHQLGS. Residues 190–210 form a helical membrane-spanning segment; the sequence is VLTVYIMCTSIGTFLGPLIAG. At 211–219 the chain is on the extracellular side; the sequence is YISAFTNFR. Residues 220–240 form a helical membrane-spanning segment; that stretch reads WVGWVAVIISGGLLITIIFGC. Topologically, residues 241 to 362 are cytoplasmic; it reads EETYFDRGQY…YFKYLKINLR (122 aa). A helical transmembrane segment spans residues 363-383; sequence MFLFPPVWLSGMFWGIQDVFL. The Extracellular segment spans residues 384–413; sequence TFYLTTQESAYYEPPWNYSDFGVAIMNVPT. A helical transmembrane segment spans residues 414–434; that stretch reads LIGAVIGCICAGIVSDYFVLW. Topologically, residues 435-448 are cytoplasmic; it reads MARHNRGILEAEFR. A helical transmembrane segment spans residues 449-469; sequence LYFSIATAIIGPAGLLMFGIG. Residues 470-477 are Extracellular-facing; sequence TARQWPWQ. The helical transmembrane segment at 478–498 threads the bilayer; sequence AIYVGLGFVGFAWGCSGDIAM. Residues 499 to 508 lie on the Cytoplasmic side of the membrane; that stretch reads AYLMDCYPDM. The chain crosses the membrane as a helical span at residues 509–529; it reads VLEGMVCTAIINNTISCIFTF. Residues 530–544 are Extracellular-facing; the sequence is TCSDWLAASGTENTY. A helical transmembrane segment spans residues 545–565; it reads IALAVINFGITAFALPMYYYG. Topologically, residues 566–586 are cytoplasmic; that stretch reads KRIRLWTKRWYLQSVNLRDGV.

The protein resides in the membrane. Functionally, seems to be involved in the uptake of several cations and of histidinol. The chain is Protein HOL1 (HOL1) from Saccharomyces cerevisiae (strain ATCC 204508 / S288c) (Baker's yeast).